A 467-amino-acid polypeptide reads, in one-letter code: Dynactin subunit 4 (467 aa).

Residue Ala2 is modified to N-acetylalanine. Lys222 is covalently cross-linked (Glycyl lysine isopeptide (Lys-Gly) (interchain with G-Cter in SUMO2)). Thr414 bears the Phosphothreonine mark.

This sequence belongs to the dynactin subunit 4 family. In terms of assembly, subunit of dynactin, a multiprotein complex part of a tripartite complex with dynein and a adapter, such as BICDL1, BICD2 or HOOK3. The dynactin complex is built around ACTR1A/ACTB filament and consists of an actin-related filament composed of a shoulder domain, a pointed end and a barbed end. Its length is defined by its flexible shoulder domain. The soulder is composed of 2 DCTN1 subunits, 4 DCTN2 and 2 DCTN3. The 4 DCNT2 (via N-terminus) bind the ACTR1A filament and act as molecular rulers to determine the length. The pointed end is important for binding dynein-dynactin cargo adapters. Consists of 4 subunits: ACTR10, DCNT4, DCTN5 and DCTN6. The barbed end is composed of a CAPZA1:CAPZB heterodimers, which binds ACTR1A/ACTB filament and dynactin and stabilizes dynactin. Interacts with ATP7B, but not ATP7A, in a copper-dependent manner. Interacts with ANK2; this interaction is required for localization at costameres. Interacts with N4BP2L1.

It is found in the cytoplasm. The protein resides in the cytoskeleton. Its subcellular location is the microtubule organizing center. The protein localises to the centrosome. It localises to the stress fiber. It is found in the cell cortex. The protein resides in the myofibril. Its subcellular location is the sarcomere. In terms of biological role, part of the dynactin complex that activates the molecular motor dynein for ultra-processive transport along microtubules. Together with dynein is involved in spindle assembly and cytokinesis. This is Dynactin subunit 4 (DCTN4) from Sus scrofa (Pig).